The primary structure comprises 326 residues: uncharacterized protein (326 aa).

127–134 (GATGSGKS) provides a ligand contact to ATP.

This sequence belongs to the GSP E family.

This is an uncharacterized protein from Escherichia coli (strain K12).